We begin with the raw amino-acid sequence, 646 residues long: Peptidylprolyl isomerase domain and WD repeat-containing protein 1 (646 aa).

Residues 1 to 30 (MAAESGSDFQQRRRRRRDPEEPEKTELSER) are disordered. At Ala2 the chain carries N-acetylalanine. Basic and acidic residues predominate over residues 17-30 (RDPEEPEKTELSER). WD repeat units follow at residues 88-126 (MHRD…IEFV), 131-170 (SHLG…MINM), 221-260 (LHTS…YKFP), and 278-319 (KCKA…RVFD). Residues 455–478 (EPEDTKSADSDRDVFNEKPSKEEV) show a composition bias toward basic and acidic residues. The segment at 455-490 (EPEDTKSADSDRDVFNEKPSKEEVMAATQAEGPKRV) is disordered. The PPIase cyclophilin-type domain occupies 490 to 645 (VSDSAIIHTS…EDVSIINITV (156 aa)).

It belongs to the cyclophilin-type PPIase family. PPIL1 subfamily. In terms of assembly, identified in the spliceosome C complex.

It localises to the nucleus. It catalyses the reaction [protein]-peptidylproline (omega=180) = [protein]-peptidylproline (omega=0). With respect to regulation, inhibited by cyclosporin A (CsA). Functionally, PPIase that catalyzes the cis-trans isomerization of proline imidic peptide bonds in oligopeptides and may therefore assist protein folding. May be involved in pre-mRNA splicing. The chain is Peptidylprolyl isomerase domain and WD repeat-containing protein 1 from Pongo abelii (Sumatran orangutan).